A 292-amino-acid polypeptide reads, in one-letter code: High-affinity heme uptake system protein IsdE (292 aa).

The N-terminal stretch at 1–19 (MRIIKYLTILVISVVILTS) is a signal peptide. C20 is lipidated: N-palmitoyl cysteine. The S-diacylglycerol cysteine moiety is linked to residue C20. The region spanning 35-291 (RIVPTTVALT…QLYDLFYKDK (257 aa)) is the Fe/B12 periplasmic-binding domain. Heme is bound by residues V41, A42, S60, Y61, M78, and H229.

It belongs to the bacterial solute-binding protein 8 family. It depends on heme b as a cofactor.

It is found in the cell membrane. Involved in heme (porphyrin) scavenging. Binds Fe(2+) and Fe(3+) heme but the largest fraction is Fe(2+) heme. Functions as a high-affinity heme binding protein and probably has a role in relaying heme-iron from cell wall-anchored isd proteins receptors to the probable permease IsdF. The protein is High-affinity heme uptake system protein IsdE (isdE) of Staphylococcus aureus (strain MRSA252).